Here is a 416-residue protein sequence, read N- to C-terminus: Probable sarcosine oxidase (416 aa).

An FAD-binding site is contributed by 10–40 (DVIVVGAGVMGSSAAYQLAKRGQKTLLLEQF). C325 carries the S-8alpha-FAD cysteine modification.

Belongs to the MSOX/MTOX family. FAD serves as cofactor.

It carries out the reaction sarcosine + O2 + H2O = formaldehyde + glycine + H2O2. This chain is Probable sarcosine oxidase, found in Arabidopsis thaliana (Mouse-ear cress).